We begin with the raw amino-acid sequence, 395 residues long: Elongation factor Tu (395 aa).

A tr-type G domain is found at K10–Q204. The tract at residues G19–T26 is G1. Residue G19–T26 coordinates GTP. Residue T26 participates in Mg(2+) binding. The G2 stretch occupies residues G60–S64. The G3 stretch occupies residues D81–G84. GTP is bound by residues D81–H85 and N136–D139. The segment at N136–D139 is G4. Positions S174–L176 are G5.

Belongs to the TRAFAC class translation factor GTPase superfamily. Classic translation factor GTPase family. EF-Tu/EF-1A subfamily. As to quaternary structure, monomer.

It is found in the cytoplasm. The enzyme catalyses GTP + H2O = GDP + phosphate + H(+). GTP hydrolase that promotes the GTP-dependent binding of aminoacyl-tRNA to the A-site of ribosomes during protein biosynthesis. The polypeptide is Elongation factor Tu (Geobacillus stearothermophilus (Bacillus stearothermophilus)).